A 34-amino-acid polypeptide reads, in one-letter code: Cytochrome b6-f complex subunit 5 (34 aa).

The chain crosses the membrane as a helical span at residues 5-25; sequence LLSGIVLGLVPVTLAGLFVTA.

This sequence belongs to the PetG family. In terms of assembly, the 4 large subunits of the cytochrome b6-f complex are cytochrome b6, subunit IV (17 kDa polypeptide, PetD), cytochrome f and the Rieske protein, while the 4 small subunits are PetG, PetL, PetM and PetN. The complex functions as a dimer.

It localises to the plastid. The protein localises to the chloroplast thylakoid membrane. Functionally, component of the cytochrome b6-f complex, which mediates electron transfer between photosystem II (PSII) and photosystem I (PSI), cyclic electron flow around PSI, and state transitions. PetG is required for either the stability or assembly of the cytochrome b6-f complex. The sequence is that of Cytochrome b6-f complex subunit 5 from Oltmannsiellopsis viridis (Marine flagellate).